The chain runs to 312 residues: Zygote arrest protein 1.L (312 aa).

Disordered regions lie at residues 79-133 (RDVG…VRFP) and 150-205 (FQDK…DQTR). 2 stretches are compositionally biased toward polar residues: residues 86–95 (NPRQDASVQC) and 113–128 (PQQS…SPTK). Residues 152–196 (DKGENLSEKTEALRSEGSRGEGGRPEGKQEDGEIKEQTKMDKADQ) are compositionally biased toward basic and acidic residues. The 3CxxC-type zinc finger occupies 214–297 (KYGYYHCKDC…RQDLCGRCKG (84 aa)).

The protein belongs to the ZAR1 family. Ovary.

It is found in the cytoplasm. The protein localises to the cytoplasmic ribonucleoprotein granule. In terms of biological role, mRNA-binding protein required for maternal mRNA storage, translation and degradation during oocyte maturation. Probably promotes formation of some phase-separated membraneless compartment that stores maternal mRNAs in oocytes: acts by undergoing liquid-liquid phase separation upon binding to maternal mRNAs. Binds to the 3'-UTR of maternal mRNAs in immature oocytes, inhibiting their translation. This is Zygote arrest protein 1.L from Xenopus laevis (African clawed frog).